Reading from the N-terminus, the 368-residue chain is Agmatine deiminase (368 aa).

C357 serves as the catalytic Amidino-cysteine intermediate.

It belongs to the agmatine deiminase family. In terms of assembly, homodimer.

The catalysed reaction is agmatine + H2O = N-carbamoylputrescine + NH4(+). It participates in amine and polyamine biosynthesis; putrescine biosynthesis via agmatine pathway; N-carbamoylputrescine from agmatine: step 1/1. Its function is as follows. Mediates the hydrolysis of agmatine into N-carbamoylputrescine in the arginine decarboxylase (ADC) pathway of putrescine biosynthesis, a basic polyamine. This chain is Agmatine deiminase, found in Stutzerimonas stutzeri (strain A1501) (Pseudomonas stutzeri).